The chain runs to 234 residues: LexA repressor (234 aa).

The H-T-H motif DNA-binding region spans 41 to 61; sequence RAEIANELGFKSANAAEEHLQ. Catalysis depends on for autocatalytic cleavage activity residues S152 and K189.

Belongs to the peptidase S24 family. In terms of assembly, homodimer.

It catalyses the reaction Hydrolysis of Ala-|-Gly bond in repressor LexA.. In terms of biological role, represses a number of genes involved in the response to DNA damage (SOS response), including recA and lexA. In the presence of single-stranded DNA, RecA interacts with LexA causing an autocatalytic cleavage which disrupts the DNA-binding part of LexA, leading to derepression of the SOS regulon and eventually DNA repair. This chain is LexA repressor, found in Polaromonas sp. (strain JS666 / ATCC BAA-500).